The following is a 342-amino-acid chain: Isopentenyl-diphosphate delta-isomerase (342 aa).

Residue 11–12 participates in substrate binding; the sequence is RK. FMN contacts are provided by residues Ser-68, 69–71, Ser-99, and Asn-128; that span reads SMT. Residue 99-101 participates in substrate binding; sequence SQR. Gln-162 serves as a coordination point for substrate. Glu-163 lines the Mg(2+) pocket. FMN-binding positions include Lys-194, Ser-219, Thr-224, 275–277, and 296–297; these read GVR and AK.

This sequence belongs to the IPP isomerase type 2 family. As to quaternary structure, homooctamer. Dimer of tetramers. The cofactor is FMN. NADPH is required as a cofactor. It depends on Mg(2+) as a cofactor.

The protein resides in the cytoplasm. The catalysed reaction is isopentenyl diphosphate = dimethylallyl diphosphate. Its function is as follows. Involved in the biosynthesis of isoprenoids. Catalyzes the 1,3-allylic rearrangement of the homoallylic substrate isopentenyl (IPP) to its allylic isomer, dimethylallyl diphosphate (DMAPP). This is Isopentenyl-diphosphate delta-isomerase from Legionella pneumophila (strain Paris).